A 418-amino-acid chain; its full sequence is Serpin A3-8 (418 aa).

The first 25 residues, 1–25, serve as a signal peptide directing secretion; sequence MRAERMSPLLALGLLVSGLCSRVHC. Residues N103, N183, N233, and N268 are each glycosylated (N-linked (GlcNAc...) asparagine).

It belongs to the serpin family. As to quaternary structure, homodimer.

The protein resides in the cytoplasmic vesicle. It localises to the secretory vesicle. Its subcellular location is the chromaffin granule. It is found in the secreted. Functionally, serine protease inhibitor. In Bos taurus (Bovine), this protein is Serpin A3-8.